We begin with the raw amino-acid sequence, 219 residues long: Ribose-5-phosphate isomerase A (219 aa).

Residues 28-31 (TGST), 81-84 (DGAD), and 94-97 (KGGG) contribute to the substrate site. Residue glutamate 103 is the Proton acceptor of the active site. Substrate is bound at residue lysine 121.

It belongs to the ribose 5-phosphate isomerase family. As to quaternary structure, homodimer.

The enzyme catalyses aldehydo-D-ribose 5-phosphate = D-ribulose 5-phosphate. It functions in the pathway carbohydrate degradation; pentose phosphate pathway; D-ribose 5-phosphate from D-ribulose 5-phosphate (non-oxidative stage): step 1/1. In terms of biological role, catalyzes the reversible conversion of ribose-5-phosphate to ribulose 5-phosphate. This chain is Ribose-5-phosphate isomerase A, found in Shigella boydii serotype 18 (strain CDC 3083-94 / BS512).